The chain runs to 496 residues: Glycerol kinase (496 aa).

An ADP-binding site is contributed by T12. T12, T13, and S14 together coordinate ATP. A sn-glycerol 3-phosphate-binding site is contributed by T12. R16 is an ADP binding site. Positions 82, 83, and 134 each coordinate sn-glycerol 3-phosphate. Residues R82, E83, and Y134 each contribute to the glycerol site. At H230 the chain carries Phosphohistidine; by HPr. D244 serves as a coordination point for sn-glycerol 3-phosphate. Glycerol is bound by residues D244 and Q245. Residues T266 and G309 each coordinate ADP. ATP contacts are provided by T266, G309, Q313, and G410. 2 residues coordinate ADP: G410 and N414.

This sequence belongs to the FGGY kinase family. Homotetramer and homodimer (in equilibrium). In terms of processing, the phosphoenolpyruvate-dependent sugar phosphotransferase system (PTS), including enzyme I, and histidine-containing protein (HPr) are required for the phosphorylation, which leads to the activation of the enzyme.

It carries out the reaction glycerol + ATP = sn-glycerol 3-phosphate + ADP + H(+). The protein operates within polyol metabolism; glycerol degradation via glycerol kinase pathway; sn-glycerol 3-phosphate from glycerol: step 1/1. Activated by phosphorylation and inhibited by fructose 1,6-bisphosphate (FBP). Functionally, key enzyme in the regulation of glycerol uptake and metabolism. Catalyzes the phosphorylation of glycerol to yield sn-glycerol 3-phosphate. This Geobacillus kaustophilus (strain HTA426) protein is Glycerol kinase.